The following is a 900-amino-acid chain: Phosphoenolpyruvate carboxylase (900 aa).

Catalysis depends on residues His140 and Lys568.

It belongs to the PEPCase type 1 family. The cofactor is Mg(2+).

The enzyme catalyses oxaloacetate + phosphate = phosphoenolpyruvate + hydrogencarbonate. Its function is as follows. Forms oxaloacetate, a four-carbon dicarboxylic acid source for the tricarboxylic acid cycle. The sequence is that of Phosphoenolpyruvate carboxylase from Neisseria meningitidis serogroup A / serotype 4A (strain DSM 15465 / Z2491).